Here is a 578-residue protein sequence, read N- to C-terminus: A-type ATP synthase subunit A (578 aa).

228–235 (GPFGSGKT) provides a ligand contact to ATP.

The protein belongs to the ATPase alpha/beta chains family. In terms of assembly, has multiple subunits with at least A(3), B(3), C, D, E, F, H, I and proteolipid K(x).

The protein resides in the cell membrane. The catalysed reaction is ATP + H2O + 4 H(+)(in) = ADP + phosphate + 5 H(+)(out). Produces ATP from ADP in the presence of a proton gradient across the membrane. The archaeal alpha chain is a catalytic subunit. Functionally, component of the A-type ATP synthase that produces ATP from ADP in the presence of a proton gradient across the membrane. The A chain is the catalytic subunit. The protein is A-type ATP synthase subunit A of Methanosarcina barkeri.